Reading from the N-terminus, the 667-residue chain is Primary amine oxidase (667 aa).

Residues 1–18 form the signal peptide; the sequence is KFALFSVLTLLSFHAVFS. An N-linked (GlcNAc...) asparagine glycan is attached at Asn-149. A disulfide bridge connects residues Cys-155 and Cys-176. A disordered region spans residues 216-246; sequence PTAENTEYQVSKQSPPFGPKQHSLTSHQPQG. Over residues 218–229 the composition is skewed to polar residues; the sequence is AENTEYQVSKQS. Residue Asn-252 is glycosylated (N-linked (GlcNAc...) asparagine). 316 to 327 is a substrate binding site; it reads FFDSGEFGFGLS. Asp-318 (proton acceptor) is an active-site residue. A disulfide bridge links Cys-337 with Cys-363. The N-linked (GlcNAc...) asparagine glycan is linked to Asn-382. 402–407 contributes to the substrate binding site; the sequence is VGNYDN. The active-site Schiff-base intermediate with substrate; via topaquinone is the Tyr-405. The residue at position 405 (Tyr-405) is a 2',4',5'-topaquinone. Residues His-460 and His-462 each coordinate Cu cation. Residues Asp-469, Phe-470, and Asp-471 each coordinate Mn(2+). Residue Asn-576 is glycosylated (N-linked (GlcNAc...) asparagine). The Mn(2+) site is built by Asp-610 and Ile-611. Cu cation is bound at residue His-621.

This sequence belongs to the copper/topaquinone oxidase family. As to quaternary structure, homodimer. Cu cation is required as a cofactor. Zn(2+) serves as cofactor. Requires L-topaquinone as cofactor. It depends on Mn(2+) as a cofactor. Glycosylated; contains two carbohydrate chains per monomer. Post-translationally, topaquinone (TPQ) is generated by copper-dependent autoxidation of a specific tyrosyl residue.

It catalyses the reaction a primary methyl amine + O2 + H2O = an aldehyde + H2O2 + NH4(+). This Lens culinaris (Lentil) protein is Primary amine oxidase.